Here is a 203-residue protein sequence, read N- to C-terminus: Ribonuclease HII (203 aa).

The 186-residue stretch at 18–203 folds into the RNase H type-2 domain; it reads GQYAGVDEVG…SFRPVREALA (186 aa). Residues aspartate 24, glutamate 25, and aspartate 116 each coordinate a divalent metal cation.

It belongs to the RNase HII family. Mn(2+) is required as a cofactor. It depends on Mg(2+) as a cofactor.

Its subcellular location is the cytoplasm. It carries out the reaction Endonucleolytic cleavage to 5'-phosphomonoester.. Functionally, endonuclease that specifically degrades the RNA of RNA-DNA hybrids. In Shewanella pealeana (strain ATCC 700345 / ANG-SQ1), this protein is Ribonuclease HII.